A 442-amino-acid polypeptide reads, in one-letter code: Decapping and exoribonuclease protein 1 (442 aa).

Over residues 31 to 40 (QSKLCKEKTT) the composition is skewed to basic and acidic residues. A disordered region spans residues 31-56 (QSKLCKEKTTSDSSSSRKPSQQRDNY). Residues 41-53 (SDSSSSRKPSQQR) are compositionally biased toward low complexity. Residue arginine 101 coordinates substrate. Residue glutamate 255 coordinates a divalent metal cation. Position 293 (glutamate 293) interacts with substrate. A divalent metal cation-binding residues include aspartate 295, glutamate 306, and leucine 307. The substrate site is built by lysine 308 and glutamine 330.

Belongs to the DXO/Dom3Z family. Requires a divalent metal cation as cofactor.

Its subcellular location is the cytoplasm. It carries out the reaction a 5'-end NAD(+)-phospho-ribonucleoside in mRNA + H2O = a 5'-end phospho-ribonucleoside in mRNA + NAD(+) + H(+). The catalysed reaction is a 5'-end (N(7)-methyl 5'-triphosphoguanosine)-ribonucleoside-ribonucleotide in mRNA + H2O = a (N(7)-methyl 5'-triphosphoguanosine)-nucleoside + a 5'-end phospho-ribonucleoside in mRNA + H(+). Functionally, decapping enzyme for NAD-capped RNAs: specifically hydrolyzes the nicotinamide adenine dinucleotide (NAD) cap from a subset of RNAs by removing the entire NAD moiety from the 5'-end of an NAD-capped RNA. The NAD-cap is present at the 5'-end of some RNAs and snoRNAs. In contrast to the canonical 5'-end N7 methylguanosine (m7G) cap, the NAD cap promotes mRNA decay. Also acts as a non-canonical decapping enzyme that removes the entire cap structure of m7G capped or incompletely capped RNAs. Has decapping activity toward incomplete 5'-end m7G cap mRNAs such as unmethylated 5'-end-capped RNA (cap0), while it has no activity toward 2'-O-ribose methylated m7G cap (cap1). Also has 5'-3' exonuclease activity. In Saccharomyces cerevisiae (strain ATCC 204508 / S288c) (Baker's yeast), this protein is Decapping and exoribonuclease protein 1 (DXO1).